A 159-amino-acid chain; its full sequence is V-type proton ATPase 16 kDa proteolipid subunit c (159 aa).

At 1 to 12 (MSSEVSSDNPIY) the chain is on the lumenal side. A helical membrane pass occupies residues 13-35 (GPFFGVMGAASAIIFSALGAAYG). The Cytoplasmic segment spans residues 36-57 (TAKSGTGIAAMSVMRPELIMKS). A helical membrane pass occupies residues 58–78 (IIPVVMAGIIAIYGLVVAVLI). Over 79–96 (AGALEEPSKYSLYRGFIH) the chain is Lumenal. The chain crosses the membrane as a helical span at residues 97–118 (LGAGLAVGFSGLAAGFAIGIVG). Over 119–130 (DAGVRGTAQQPR) the chain is Cytoplasmic. Residues 131–156 (LFVGMILILIFAEVLGLYGLIVAIYL) traverse the membrane as a helical segment. Residues 157–159 (YTK) lie on the Lumenal side of the membrane.

It belongs to the V-ATPase proteolipid subunit family. As to quaternary structure, V-ATPase is a heteromultimeric enzyme made up of two complexes: the ATP-hydrolytic V1 complex and the proton translocation V0 complex. The V1 complex consists of three catalytic AB heterodimers that form a heterohexamer, three peripheral stalks each consisting of EG heterodimers, one central rotor including subunits D and F, and the regulatory subunits C and H. The proton translocation complex V0 consists of the proton transport subunit a, a ring of proteolipid subunits c9c'', rotary subunit d, subunits e and f, and the accessory subunits VhaAC45 and ATP6AP2. Expressed in the larval middle mid-gut; predominantly in the copper cell region with lower levels of expression in the interstitial cells.

It localises to the membrane. Proton-conducting pore forming subunit of the V0 complex of vacuolar(H+)-ATPase (V-ATPase), a multisubunit enzyme composed of a peripheral complex (V1) that hydrolyzes ATP and a membrane integral complex (V0) that translocates protons. V-ATPase is responsible for acidifying and maintaining the pH of intracellular compartments and in some cell types, is targeted to the plasma membrane, where it is responsible for acidifying the extracellular environment. In enterocytes, acts as part of a pHCl-2 sensory pathway which mediates Tor-dependent larval growth and metabolism in response to zinc availability. Likely acts in maintaining enterocyte lysosomal acidification which consequently promotes Tor activation at the lysosome membrane. The protein is V-type proton ATPase 16 kDa proteolipid subunit c (Vha16-1) of Drosophila melanogaster (Fruit fly).